Here is a 147-residue protein sequence, read N- to C-terminus: Protein archease (147 aa).

Ca(2+) is bound by residues aspartate 17, aspartate 146, and isoleucine 147.

Belongs to the archease family.

In terms of biological role, activates the tRNA-splicing ligase complex by facilitating the enzymatic turnover of catalytic subunit RtcB. Acts by promoting the guanylylation of RtcB, a key intermediate step in tRNA ligation. Can also alter the NTP specificity of RtcB such that ATP, dGTP or ITP is used efficiently. This chain is Protein archease, found in Pyrobaculum neutrophilum (strain DSM 2338 / JCM 9278 / NBRC 100436 / V24Sta) (Thermoproteus neutrophilus).